The chain runs to 936 residues: VPS35 endosomal protein-sorting factor-like (936 aa).

Disordered stretches follow at residues S43–L69 and D87–D113. The span at K51 to L69 shows a compositional bias: low complexity. Position 265 is a phosphoserine (S265). A helical transmembrane segment spans residues A672 to F692.

It belongs to the VPS35L family. In terms of assembly, component of the heterotrimeric retriever complex formed by VPS26C, VPS29 and VPS35L. Interacts with VPS29. Interacts with COMMD1, CCDC93 and CCDC22; associates with the CCC (COMMD/CCDC22/CCDC93) complex which contains at least COMMD1 (and possibly other COMM domain-containing proteins), CCDC22 and CCDC93. Interacts with WASHC1, WASHC2A and WASHC2C. Interacts with SNX17 and SNX31.

It is found in the membrane. It localises to the endosome. Acts as a component of the retriever complex. The retriever complex is a heterotrimeric complex related to retromer cargo-selective complex (CSC) and essential for retromer-independent retrieval and recycling of numerous cargos such as integrin alpha-5/beta-1 (ITGA5:ITGB1). The recruitment of the retriever complex to the endosomal membrane involves CCC and WASH complexes. In the endosomes, drives the retrieval and recycling of NxxY-motif-containing cargo proteins by coupling to SNX17, a cargo essential for the homeostatic maintenance of numerous cell surface proteins associated with processes that include cell migration, cell adhesion, nutrient supply and cell signaling. Involved in copper-dependent ATP7A trafficking between the trans-Golgi network and vesicles in the cell periphery; the function is proposed to depend on its association with the CCC complex and cooperation with the WASH complex on early endosomes. Seems not to be required for CCC complex stability. The chain is VPS35 endosomal protein-sorting factor-like from Rattus norvegicus (Rat).